Reading from the N-terminus, the 545-residue chain is Sensory neuron membrane protein 1 (545 aa).

The Cytoplasmic portion of the chain corresponds to 1–10 (MELKERNFKK). A helical transmembrane segment spans residues 11–31 (IGLICVAVLLCGMVFSYGIFP). The Extracellular segment spans residues 32 to 464 (SILRFMIKQN…LFLGLKFNAT (433 aa)). Residues Asn69, Asn214, and Asn227 are each glycosylated (N-linked (GlcNAc...) asparagine). 3 disulfide bridges follow: Cys266/Cys331, Cys295/Cys351, and Cys333/Cys340. N-linked (GlcNAc...) asparagine glycosylation is found at Asn444 and Asn462. The chain crosses the membrane as a helical span at residues 465-485 (VKWLTIIIGTVGAVGSAYMYF). Residues 486 to 545 (RKETKTTDVAPVDVSTPDTNPSSAKDGVVNVSLGRNLPPVIDGLDKPPKLRATELQQERY) are Cytoplasmic-facing.

Belongs to the CD36 family. Selectively expressed in antenna.

The protein resides in the cell membrane. Functionally, plays an olfactory role that is not restricted to pheromone sensitivity. The polypeptide is Sensory neuron membrane protein 1 (snmp1) (Anopheles gambiae (African malaria mosquito)).